The sequence spans 149 residues: Large ribosomal subunit protein bL9 (149 aa).

It belongs to the bacterial ribosomal protein bL9 family.

Binds to the 23S rRNA. This Thermotoga sp. (strain RQ2) protein is Large ribosomal subunit protein bL9.